The chain runs to 154 residues: OCIA domain-containing protein 2 (154 aa).

The OCIA domain maps to 1 to 120 (MASVSTHGNQ…HSFEDQLRGA (120 aa)). The residue at position 41 (K41) is an N6-acetyllysine.

As to quaternary structure, interacts (via OCIA domain) with OCIAD1/ASRIJ and STAT3. As to expression, abundant in kidney, liver and brain.

It is found in the endosome. Its subcellular location is the mitochondrion. It localises to the mitochondrion inner membrane. Its function is as follows. Has an essential role in the assembly of mitochondrial respiratory chain complex III. Is also required for STAT3 activation and plays a role in cell migration. In Mus musculus (Mouse), this protein is OCIA domain-containing protein 2 (Ociad2).